The primary structure comprises 411 residues: Peptide chain release factor subunit 1 (411 aa).

Belongs to the eukaryotic release factor 1 family. In terms of assembly, heterodimer of two subunits, one of which binds GTP.

It localises to the cytoplasm. Directs the termination of nascent peptide synthesis (translation) in response to the termination codons UAA, UAG and UGA. This Methanosphaera stadtmanae (strain ATCC 43021 / DSM 3091 / JCM 11832 / MCB-3) protein is Peptide chain release factor subunit 1.